A 59-amino-acid chain; its full sequence is Large ribosomal subunit protein bL32B (59 aa).

This sequence belongs to the bacterial ribosomal protein bL32 family.

The polypeptide is Large ribosomal subunit protein bL32B (rpmF2) (Enterococcus faecalis (strain ATCC 700802 / V583)).